The chain runs to 240 residues: Ribonuclease HII (240 aa).

Positions 31–222 (RLIAGVDEAG…VRRALGLETA (192 aa)) constitute an RNase H type-2 domain. The a divalent metal cation site is built by aspartate 37, glutamate 38, and aspartate 130.

It belongs to the RNase HII family. The cofactor is Mn(2+). Mg(2+) is required as a cofactor.

It localises to the cytoplasm. The catalysed reaction is Endonucleolytic cleavage to 5'-phosphomonoester.. Its function is as follows. Endonuclease that specifically degrades the RNA of RNA-DNA hybrids. The polypeptide is Ribonuclease HII (Xanthomonas campestris pv. campestris (strain 8004)).